The following is a 977-amino-acid chain: Short transient receptor potential channel 4 (977 aa).

At 1–324 the chain is on the cytoplasmic side; the sequence is MAQFYYKRNV…YDEFPGWRRR (324 aa). ANK repeat units lie at residues 29-60, 71-93, 96-118, and 141-165; these read LSPS…IYFK, RTAL…LSFN, VGDA…LLNH, and PDIT…VQKG. The Zn(2+) site is built by H172, C176, C178, and C181. Residues 223–260 adopt a coiled-coil conformation; that stretch reads LSWELQELSKVENEFKSEYEELSRQCKQFAKDLLDQTR. Residues 325-359 constitute an intramembrane region (discontinuously helical); the sequence is HWAVKMVTCFIIGLLFPVFSVCYLIAPKSPLGLFI. The Cytoplasmic segment spans residues 360–362; the sequence is RKP. A helical transmembrane segment spans residues 363-383; sequence FIKFICHTASYLTFLFLLLLA. Residues 384 to 403 lie on the Extracellular side of the membrane; it reads SQHIDRSDLNRQGPPPTIVE. Residues 404–418 traverse the membrane as a helical segment; the sequence is WMILPWVLGFIWGEI. E417, Q420, N435, and D438 together coordinate Ca(2+). Topologically, residues 419 to 432 are cytoplasmic; it reads KQMWDGGLQDYIHD. A helical transmembrane segment spans residues 433-453; the sequence is WWNLMDFVMNSLYLATISLKI. Over 454-475 the chain is Extracellular; it reads VAFVKYSALNPRESWDMWHPTL. A helical membrane pass occupies residues 476–498; it reads VAEALFAIANIFSSLRLISLFTA. At 499–511 the chain is on the cytoplasmic side; the sequence is NSHLGPLQISLGR. The helical transmembrane segment at 512–534 threads the bilayer; the sequence is MLLDILKFLFIYCLVLLAFANGL. Over 535–599 the chain is Extracellular; that stretch reads NQLYFYYEET…HEFTEFVGAT (65 aa). C549 and C554 are joined by a disulfide. Residues 600–620 form a helical membrane-spanning segment; it reads MFGTYNVISLVVLLNMLIAMM. The tract at residues 615 to 977 is interaction with ITPR1, ITPR2 and ITPR3; sequence MLIAMMNNSY…THEDYVTTRL (363 aa). At 621 to 977 the chain is on the cytoplasmic side; the sequence is NNSYQLIADH…THEDYVTTRL (357 aa). Residues 762–790 are disordered; that stretch reads IQSANASKESSNSADSDEKSDSEGNSKDK. A compositionally biased stretch (low complexity) spans 764–775; that stretch reads SANASKESSNSA. Over residues 777-788 the composition is skewed to basic and acidic residues; that stretch reads SDEKSDSEGNSK. 2 positions are modified to phosphotyrosine; by FYN: Y959 and Y972. The tract at residues 975-977 is PDZ-binding domain; it reads TRL.

This sequence belongs to the transient receptor (TC 1.A.4) family. STrpC subfamily. TRPC4 sub-subfamily. Homotetramer. Heterotetramer with TRPC1 and/or TRPC5. Forms a heteromeric ion channel with TRPC1, with a 1:3 TRPC1:TRPC4 stoichiometry. Interacts with TRPC4AP. Isoform alpha but not isoform beta interacts with ITPR1, ITPR2 and ITPR3. Interacts with (via PDZ-binding domain) with NHERF1. Interacts with MX1 and RNF24. Interacts (via CIRB domain) with SESTD1 (via spectrin 1 repeat). Interacts with CDH5 and CTNNB1. Interacts with SPTAN1 (via C-terminal spectrin repeats) and SPTBN5 (via C-terminus). Interacts (via protein 4.1-binding domain) with EPB41L2. Interacts with PLSCR1. In terms of processing, phosphorylation modulates TRPC channel function by regulating the level of TRPC4 at the cell surface and by increasing the association with NHERF1. Strongly expressed in placenta. Expressed at lower levels in heart, pancreas, kidney and brain. Expressed in endothelial cells. Isoform alpha was found to be the predominant isoform. Isoform beta was not found in pancreas and brain.

The protein resides in the cell membrane. It carries out the reaction Ca(2+)(in) = Ca(2+)(out). The enzyme catalyses Na(+)(in) = Na(+)(out). It catalyses the reaction Li(+)(in) = Li(+)(out). The catalysed reaction is Cs(+)(in) = Cs(+)(out). Its activity is regulated as follows. May be operated by a phosphatidylinositol second messenger system activated by receptor tyrosine kinases or G-protein coupled receptors. May be activated by intracellular calcium store depletion. Inhibited by xanthine-based inhibitor Pico145. In terms of biological role, forms a receptor-activated non-selective calcium permeant cation channel. Acts as a cell-cell contact-dependent endothelial calcium entry channel. Forms a homomeric ion channel or a heteromeric ion channel with TRPC1; the heteromeric ion channel has reduced calcium permeability compared to the homomeric channel. Also permeable to monovalent ions including sodium, lithium and cesium ions. Functionally, forms a receptor-activated non-selective calcium permeant cation channel. In Homo sapiens (Human), this protein is Short transient receptor potential channel 4 (TRPC4).